Here is a 341-residue protein sequence, read N- to C-terminus: UDP-3-O-acylglucosamine N-acyltransferase (341 aa).

Catalysis depends on His-237, which acts as the Proton acceptor.

Belongs to the transferase hexapeptide repeat family. LpxD subfamily. In terms of assembly, homotrimer.

It catalyses the reaction a UDP-3-O-[(3R)-3-hydroxyacyl]-alpha-D-glucosamine + a (3R)-hydroxyacyl-[ACP] = a UDP-2-N,3-O-bis[(3R)-3-hydroxyacyl]-alpha-D-glucosamine + holo-[ACP] + H(+). It participates in bacterial outer membrane biogenesis; LPS lipid A biosynthesis. Catalyzes the N-acylation of UDP-3-O-acylglucosamine using 3-hydroxyacyl-ACP as the acyl donor. Is involved in the biosynthesis of lipid A, a phosphorylated glycolipid that anchors the lipopolysaccharide to the outer membrane of the cell. The polypeptide is UDP-3-O-acylglucosamine N-acyltransferase (Azoarcus sp. (strain BH72)).